Here is a 260-residue protein sequence, read N- to C-terminus: Snake venom serine protease Dav-X (260 aa).

Residues 1–18 (MVLIRVLANLLILQLSYA) form the signal peptide. Residues 19 to 24 (QKSSEL) constitute a propeptide that is removed on maturation. The 227-residue stretch at 25–251 (VIGGVECDIN…YTDWIQNIIA (227 aa)) folds into the Peptidase S1 domain. Intrachain disulfides connect C31/C165, C52/C68, C102/C258, C144/C212, C176/C191, and C202/C227. Residue H67 is the Charge relay system of the active site. N81 is a glycosylation site (N-linked (GlcNAc...) asparagine). D112 acts as the Charge relay system in catalysis. N-linked (GlcNAc...) asparagine glycosylation is found at N124 and N172. S206 (charge relay system) is an active-site residue. N-linked (GlcNAc...) asparagine glycosylation occurs at N241.

The protein belongs to the peptidase S1 family. Snake venom subfamily. As to quaternary structure, monomer. As to expression, expressed by the venom gland.

Its subcellular location is the secreted. Its function is as follows. Snake venom serine protease that may act in the hemostasis system of the prey. This Deinagkistrodon acutus (Hundred-pace snake) protein is Snake venom serine protease Dav-X.